A 658-amino-acid chain; its full sequence is DNA mismatch repair protein MutL (658 aa).

Disordered regions lie at residues 114–137 (RQND…PTAA) and 437–456 (RFGN…PLSD). The span at 442-456 (PSETPAPQTDTPLSD) shows a compositional bias: polar residues.

The protein belongs to the DNA mismatch repair MutL/HexB family.

In terms of biological role, this protein is involved in the repair of mismatches in DNA. It is required for dam-dependent methyl-directed DNA mismatch repair. May act as a 'molecular matchmaker', a protein that promotes the formation of a stable complex between two or more DNA-binding proteins in an ATP-dependent manner without itself being part of a final effector complex. This Neisseria meningitidis serogroup B (strain ATCC BAA-335 / MC58) protein is DNA mismatch repair protein MutL.